Reading from the N-terminus, the 708-residue chain is Metal-pseudopaline receptor CntO (708 aa).

The signal sequence occupies residues 1–21 (MRVSVSLVLGVGLGCSSPALW). The TBDR plug domain maps to 63–169 (RIEDIPQAIS…PGGTVNLVTK (107 aa)). A TBDR beta-barrel domain is found at 174 to 708 (ERFARLHASA…NLTMSLTLNY (535 aa)).

This sequence belongs to the TonB-dependent receptor family.

It localises to the cell outer membrane. Its function is as follows. Transports the metallophore pseudopaline, which is involved in the acquisition of nickel and zinc, and thus enables bacterial growth inside the host, where metal access is limited. Is probably involved in the import of pseudopaline-metal complexes. In Pseudomonas aeruginosa (strain ATCC 15692 / DSM 22644 / CIP 104116 / JCM 14847 / LMG 12228 / 1C / PRS 101 / PAO1), this protein is Metal-pseudopaline receptor CntO.